The chain runs to 105 residues: Nucleoid-associated protein SSP2277 (105 aa).

The interval 1 to 41 is disordered; that stretch reads MRGGGNMQQMMKQMQKMQKKMGEEQEKLKEEKVQGTAGGGM. Low complexity predominate over residues 7-16; sequence MQQMMKQMQK. The segment covering 20–33 has biased composition (basic and acidic residues); it reads KMGEEQEKLKEEKV.

It belongs to the YbaB/EbfC family. Homodimer.

The protein resides in the cytoplasm. It is found in the nucleoid. Functionally, binds to DNA and alters its conformation. May be involved in regulation of gene expression, nucleoid organization and DNA protection. This is Nucleoid-associated protein SSP2277 from Staphylococcus saprophyticus subsp. saprophyticus (strain ATCC 15305 / DSM 20229 / NCIMB 8711 / NCTC 7292 / S-41).